We begin with the raw amino-acid sequence, 117 residues long: Large ribosomal subunit protein eL30B (117 aa).

The span at 1–14 (MSAAPTTAPVAAVS) shows a compositional bias: low complexity. Residues 1–22 (MSAAPTTAPVAAVSKKGKKSGD) are disordered.

This sequence belongs to the eukaryotic ribosomal protein eL30 family. In terms of assembly, component of the large ribosomal subunit (LSU). Mature yeast ribosomes consist of a small (40S) and a large (60S) subunit. The 40S small subunit contains 1 molecule of ribosomal RNA (18S rRNA) and at least 33 different proteins. The large 60S subunit contains 3 rRNA molecules (25S, 5.8S and 5S rRNA) and at least 46 different proteins.

It is found in the cytoplasm. Component of the ribosome, a large ribonucleoprotein complex responsible for the synthesis of proteins in the cell. The small ribosomal subunit (SSU) binds messenger RNAs (mRNAs) and translates the encoded message by selecting cognate aminoacyl-transfer RNA (tRNA) molecules. The large subunit (LSU) contains the ribosomal catalytic site termed the peptidyl transferase center (PTC), which catalyzes the formation of peptide bonds, thereby polymerizing the amino acids delivered by tRNAs into a polypeptide chain. The nascent polypeptides leave the ribosome through a tunnel in the LSU and interact with protein factors that function in enzymatic processing, targeting, and the membrane insertion of nascent chains at the exit of the ribosomal tunnel. The sequence is that of Large ribosomal subunit protein eL30B (rpl3002) from Schizosaccharomyces pombe (strain 972 / ATCC 24843) (Fission yeast).